Here is a 739-residue protein sequence, read N- to C-terminus: Phosphoribosylformylglycinamidine synthase subunit PurL (739 aa).

Residue His54 is part of the active site. ATP-binding residues include Tyr57 and Lys96. Glu98 serves as a coordination point for Mg(2+). Substrate is bound by residues Ser99 to His102 and Arg121. His100 (proton acceptor) is an active-site residue. Position 122 (Asp122) interacts with Mg(2+). Gln245 is a binding site for substrate. Asp273 is a Mg(2+) binding site. A substrate-binding site is contributed by Glu317 to Gln319. Residues Asp500 and Gly537 each contribute to the ATP site. Asn538 is a binding site for Mg(2+). Ser540 contributes to the substrate binding site.

It belongs to the FGAMS family. Monomer. Part of the FGAM synthase complex composed of 1 PurL, 1 PurQ and 2 PurS subunits.

The protein localises to the cytoplasm. The catalysed reaction is N(2)-formyl-N(1)-(5-phospho-beta-D-ribosyl)glycinamide + L-glutamine + ATP + H2O = 2-formamido-N(1)-(5-O-phospho-beta-D-ribosyl)acetamidine + L-glutamate + ADP + phosphate + H(+). Its pathway is purine metabolism; IMP biosynthesis via de novo pathway; 5-amino-1-(5-phospho-D-ribosyl)imidazole from N(2)-formyl-N(1)-(5-phospho-D-ribosyl)glycinamide: step 1/2. Functionally, part of the phosphoribosylformylglycinamidine synthase complex involved in the purines biosynthetic pathway. Catalyzes the ATP-dependent conversion of formylglycinamide ribonucleotide (FGAR) and glutamine to yield formylglycinamidine ribonucleotide (FGAM) and glutamate. The FGAM synthase complex is composed of three subunits. PurQ produces an ammonia molecule by converting glutamine to glutamate. PurL transfers the ammonia molecule to FGAR to form FGAM in an ATP-dependent manner. PurS interacts with PurQ and PurL and is thought to assist in the transfer of the ammonia molecule from PurQ to PurL. In Bacillus cytotoxicus (strain DSM 22905 / CIP 110041 / 391-98 / NVH 391-98), this protein is Phosphoribosylformylglycinamidine synthase subunit PurL.